Reading from the N-terminus, the 350-residue chain is ATPase GET3 (350 aa).

ATP is bound at residue 26–33; it reads KGGVGKTT. Asp57 is a catalytic residue. Residues Glu243 and Asn270 each coordinate ATP. Residues Cys282 and Cys285 each contribute to the Zn(2+) site.

The protein belongs to the arsA ATPase family. In terms of assembly, homodimer. Component of the Golgi to ER traffic (GET) complex, which is composed of GET1, GET2 and GET3. Within the complex, GET1 and GET2 form a heterotetramer which is stabilized by phosphatidylinositol binding and which binds to the GET3 homodimer. Interacts with the chloride channel protein GEF1.

It localises to the cytoplasm. Its subcellular location is the endoplasmic reticulum. The protein resides in the golgi apparatus. Its function is as follows. ATPase required for the post-translational delivery of tail-anchored (TA) proteins to the endoplasmic reticulum. Recognizes and selectively binds the transmembrane domain of TA proteins in the cytosol. This complex then targets to the endoplasmic reticulum by membrane-bound receptors GET1 and GET2, where the tail-anchored protein is released for insertion. This process is regulated by ATP binding and hydrolysis. ATP binding drives the homodimer towards the closed dimer state, facilitating recognition of newly synthesized TA membrane proteins. ATP hydrolysis is required for insertion. Subsequently, the homodimer reverts towards the open dimer state, lowering its affinity for the GET1-GET2 receptor, and returning it to the cytosol to initiate a new round of targeting. Cooperates with the HDEL receptor ERD2 to mediate the ATP-dependent retrieval of resident ER proteins that contain a C-terminal H-D-E-L retention signal from the Golgi to the ER. Involved in low-level resistance to the oxyanions arsenite and arsenate, and in heat tolerance. In Candida albicans (strain SC5314 / ATCC MYA-2876) (Yeast), this protein is ATPase GET3.